Reading from the N-terminus, the 233-residue chain is 2-C-methyl-D-erythritol 4-phosphate cytidylyltransferase (233 aa).

The protein belongs to the IspD/TarI cytidylyltransferase family. IspD subfamily.

The catalysed reaction is 2-C-methyl-D-erythritol 4-phosphate + CTP + H(+) = 4-CDP-2-C-methyl-D-erythritol + diphosphate. It participates in isoprenoid biosynthesis; isopentenyl diphosphate biosynthesis via DXP pathway; isopentenyl diphosphate from 1-deoxy-D-xylulose 5-phosphate: step 2/6. In terms of biological role, catalyzes the formation of 4-diphosphocytidyl-2-C-methyl-D-erythritol from CTP and 2-C-methyl-D-erythritol 4-phosphate (MEP). The chain is 2-C-methyl-D-erythritol 4-phosphate cytidylyltransferase from Nitrosomonas eutropha (strain DSM 101675 / C91 / Nm57).